Reading from the N-terminus, the 1008-residue chain is Retinoblastoma-related protein (1008 aa).

The disordered stretch occupies residues 375 to 394 (KRKVDSMTSPTKTITSPLSP). The span at 380–392 (SMTSPTKTITSPL) shows a compositional bias: polar residues. The domain A stretch occupies residues 404 to 605 (TPVSTAMTTA…EKGSSMYNSL (202 aa)). A pocket region spans residues 404-853 (TPVSTAMTTA…NEVFIPSVKP (450 aa)). The spacer stretch occupies residues 606–722 (TIARPNLSNE…HPTRGETCGE (117 aa)). A domain B region spans residues 723-853 (TAVNLFFSKI…NEVFIPSVKP (131 aa)). 2 disordered regions span residues 865-899 (KNPN…SLPD) and 988-1008 (LQNG…LKTE).

It belongs to the retinoblastoma protein (RB) family.

Its subcellular location is the nucleus. In terms of biological role, regulator of biological processes that recruits a histone deacetylase to control gene transcription. May play a role in the entry into mitosis, negatively regulating the cell proliferation. Formation of stable complexes with geminiviridae replication-associated proteins may create a cellular environment which favors viral DNA replication. In Pilosella officinarum (Mouse-ear hawkweed), this protein is Retinoblastoma-related protein (RBR).